Consider the following 315-residue polypeptide: CAAX prenyl protease 2 (315 aa).

Residues 1-3 lie on the Lumenal side of the membrane; the sequence is MLQ. A helical membrane pass occupies residues 4–23; sequence FSTFLVLLYISISYVLPLYA. The Cytoplasmic portion of the chain corresponds to 24 to 44; that stretch reads TSQPEGSKRDNPRTIKSRMQK. The helical transmembrane segment at 45–65 threads the bilayer; sequence LTIMLISNLFLVPFLQSQLSS. Over 66 to 74 the chain is Lumenal; the sequence is TTSHISFKD. The helical transmembrane segment at 75-95 threads the bilayer; that stretch reads AFLGLGIIPGYYAALPNPWQF. Over 96–105 the chain is Cytoplasmic; it reads SQFVKDLTKC. The chain crosses the membrane as a helical span at residues 106–126; it reads VAMLLTLYCGPVLDFVLYHLL. The Lumenal segment spans residues 127-148; the sequence is NPKSSILEDFYHEFLNIWSFRN. The chain crosses the membrane as a helical span at residues 149–169; it reads FIFAPITEEIFYTSMLLTTYL. Residues E156 and H194 each act as proton donor/acceptor in the active site. The Cytoplasmic segment spans residues 170–208; it reads NLIPHSQLSYQQLFWQPSLFFGLAHAHHAYEQLQEGSMT. Residues 209–229 form a helical membrane-spanning segment; that stretch reads TVSILLTTCFQILYTTLFGGL. Residues 230–237 lie on the Lumenal side of the membrane; that stretch reads TKFVFVRT. Residues 238 to 258 form a helical membrane-spanning segment; it reads GGNLWCCIILHALCNIMGFPG. The Cytoplasmic segment spans residues 259-275; sequence PSRLNLHFTVVDKKAGR. The chain crosses the membrane as a helical span at residues 276–296; that stretch reads ISKLVSIWNKCYFALLVLGLI. Topologically, residues 297–315 are lumenal; that stretch reads SLKDTLQTLVGTPGYRITL.

The protein belongs to the peptidase U48 family.

It localises to the endoplasmic reticulum membrane. It carries out the reaction Hydrolyzes the peptide bond -P2-(S-farnesyl or geranylgeranyl)C-P1'-P2'-P3'-COOH where P1' and P2' are amino acids with aliphatic sidechains and P3' is any C-terminal residue.. Protease involved in the processing of a variety of prenylated proteins containing the C-terminal CAAX motif, where C is a cysteine modified with an isoprenoid lipid, A is an aliphatic amino acid and X is any C-terminal amino acid. Proteolytically removes the C-terminal three residues of farnesylated proteins, leaving the prenylated cysteine as the new C-terminus. Target proteins include the a-factor mating pheromone and RAS. Its substrate specificity is overlapping but distinct with that of STE24. This Saccharomyces cerevisiae (strain ATCC 204508 / S288c) (Baker's yeast) protein is CAAX prenyl protease 2 (RCE1).